The sequence spans 295 residues: Aspartate carbamoyltransferase catalytic subunit (295 aa).

2 residues coordinate carbamoyl phosphate: arginine 54 and threonine 55. Lysine 82 is a binding site for L-aspartate. Arginine 104, histidine 132, and glutamine 135 together coordinate carbamoyl phosphate. Residues arginine 165 and arginine 218 each contribute to the L-aspartate site. 2 residues coordinate carbamoyl phosphate: glycine 257 and proline 258.

The protein belongs to the aspartate/ornithine carbamoyltransferase superfamily. ATCase family. Heterododecamer (2C3:3R2) of six catalytic PyrB chains organized as two trimers (C3), and six regulatory PyrI chains organized as three dimers (R2).

The enzyme catalyses carbamoyl phosphate + L-aspartate = N-carbamoyl-L-aspartate + phosphate + H(+). It participates in pyrimidine metabolism; UMP biosynthesis via de novo pathway; (S)-dihydroorotate from bicarbonate: step 2/3. Its function is as follows. Catalyzes the condensation of carbamoyl phosphate and aspartate to form carbamoyl aspartate and inorganic phosphate, the committed step in the de novo pyrimidine nucleotide biosynthesis pathway. In Wolbachia pipientis wMel, this protein is Aspartate carbamoyltransferase catalytic subunit.